The primary structure comprises 286 residues: Small ribosomal subunit protein uS2 (286 aa).

The disordered stretch occupies residues 213–286 (EEQAQNNKWA…GAQEGGEWGS (74 aa)). Positions 227-241 (SPALSAAVPSSAAPV) are enriched in low complexity. Residues 244–270 (WSSSPSKETTEWGASNTAAAAKSSWSN) show a composition bias toward polar residues. The segment covering 274–286 (GEWGAQEGGEWGS) has biased composition (gly residues).

The protein belongs to the universal ribosomal protein uS2 family. Component of the small ribosomal subunit. Mature ribosomes consist of a small (40S) and a large (60S) subunit. The 40S subunit contains about 33 different proteins and 1 molecule of RNA (18S). The 60S subunit contains about 49 different proteins and 3 molecules of RNA (28S, 5.8S and 5S). Interacts with ribosomal protein S21.

The protein localises to the cytoplasm. Its function is as follows. Required for the assembly and/or stability of the 40S ribosomal subunit. Required for the processing of the 20S rRNA-precursor to mature 18S rRNA in a late step of the maturation of 40S ribosomal subunits. In Trichoplax adhaerens (Trichoplax reptans), this protein is Small ribosomal subunit protein uS2.